The chain runs to 514 residues: Cilia- and flagella-associated protein 53 (514 aa).

Coiled-coil stretches lie at residues 91-148 and 203-474; these read IINI…RQDF and KLWE…REFE.

This sequence belongs to the CFAP53 family. In terms of assembly, microtubule inner protein component of sperm flagellar doublet microtubules. Interacts with PIERCE1 and PIERCE2; the interactions link outer dynein arms docking complex (ODA-DC) to the internal microtubule inner proteins (MIP) in cilium axoneme. Interacts with CCDC38. Interacts with CCDC42 and IFT88. Interacts with centriolar satellite proteins PIBF1/CEP90 and PCM1. Interacts with dyneins DNAIC1, DNAIC2 AND DNAH11 and with ODA-DC component ODAD4/TTC25. Expressed in skin fibroblasts (at protein level). Expressed in nasal respiratory epithelial cells (at protein level). Expressed in airway epithelial cells.

It is found in the cytoplasm. Its subcellular location is the cytoskeleton. It localises to the cilium axoneme. The protein localises to the flagellum axoneme. The protein resides in the microtubule organizing center. It is found in the centrosome. Its subcellular location is the centriole. It localises to the centriolar satellite. The protein localises to the spindle pole. The protein resides in the cell projection. It is found in the cilium. Functionally, microtubule inner protein (MIP) part of the dynein-decorated doublet microtubules (DMTs) in cilia axoneme, which is required for motile cilia beating. Regulates motility patterns of both 9+0 and 9+2 motile cilia through differential localization and recruitment of axonemal dynein components. Required for centriolar satellite integrity and non-motile cilium assembly. Required for motile cilium formation. Through its role in the beating of primary cilia, involved in the establishment of organ laterality during embryogenesis. Required for sperm flagellum biogenesis and is essential for male fertility. The sequence is that of Cilia- and flagella-associated protein 53 from Homo sapiens (Human).